The sequence spans 419 residues: UDP-N-acetylglucosamine 1-carboxyvinyltransferase 2 (419 aa).

Phosphoenolpyruvate is bound at residue 24 to 25; that stretch reads KN. A UDP-N-acetyl-alpha-D-glucosamine-binding site is contributed by Arg-94. Cys-118 serves as the catalytic Proton donor. Cys-118 bears the 2-(S-cysteinyl)pyruvic acid O-phosphothioketal mark. UDP-N-acetyl-alpha-D-glucosamine contacts are provided by residues 123 to 127, Asp-307, and Ile-329; that span reads RPIDQ.

It belongs to the EPSP synthase family. MurA subfamily.

The protein resides in the cytoplasm. It carries out the reaction phosphoenolpyruvate + UDP-N-acetyl-alpha-D-glucosamine = UDP-N-acetyl-3-O-(1-carboxyvinyl)-alpha-D-glucosamine + phosphate. Its pathway is cell wall biogenesis; peptidoglycan biosynthesis. Cell wall formation. Adds enolpyruvyl to UDP-N-acetylglucosamine. In Staphylococcus aureus (strain bovine RF122 / ET3-1), this protein is UDP-N-acetylglucosamine 1-carboxyvinyltransferase 2.